Here is a 639-residue protein sequence, read N- to C-terminus: Synaptotagmin-16 (639 aa).

Residues 95-119 show a composition bias toward polar residues; it reads NSDLQDSVQTASPTLGQQAEDSSSV. The segment at 95 to 191 is disordered; sequence NSDLQDSVQT…SSESDEDVTK (97 aa). A compositionally biased stretch (pro residues) spans 121–134; that stretch reads PPWPSKIPGAPKPQ. Over residues 142–151 the composition is skewed to basic and acidic residues; it reads EEDHHSERQR. Over residues 174 to 187 the composition is skewed to acidic residues; that stretch reads GDDEEPSTSSESDE. The C2 1 domain maps to 344–463; it reads KCGDLDVIFE…HPEGEMKVTL (120 aa). The tract at residues 470–496 is disordered; the sequence is NLSSGESPLSPSVVSHSDSASSTQSLS. A compositionally biased stretch (low complexity) spans 476–496; that stretch reads SPLSPSVVSHSDSASSTQSLS. In terms of domain architecture, C2 2 spans 499–634; it reads GVPELLVGLS…SKGQQTCRWH (136 aa).

It belongs to the synaptotagmin family. Homodimer. Can also form heterodimers. In terms of tissue distribution, highly expressed in heart and testis. Moderately expressed in kidney.

In terms of biological role, may be involved in the trafficking and exocytosis of secretory vesicles in non-neuronal tissues. Is Ca(2+)-independent. This chain is Synaptotagmin-16 (Syt16), found in Mus musculus (Mouse).